A 395-amino-acid polypeptide reads, in one-letter code: Glutamate N-acetyltransferase (395 aa).

Residues Thr146, Lys169, Thr180, Glu263, Asn390, and Thr395 each coordinate substrate. Catalysis depends on Thr180, which acts as the Nucleophile.

Belongs to the ArgJ family. In terms of assembly, heterotetramer of two alpha and two beta chains.

The protein resides in the cytoplasm. It catalyses the reaction N(2)-acetyl-L-ornithine + L-glutamate = N-acetyl-L-glutamate + L-ornithine. It functions in the pathway amino-acid biosynthesis; L-arginine biosynthesis; L-ornithine and N-acetyl-L-glutamate from L-glutamate and N(2)-acetyl-L-ornithine (cyclic): step 1/1. Functionally, catalyzes the transfer of the acetyl group from N(2)-acetylornithine to glutamate, forming N-acetylglutamate and L-ornithine. This chain is Glutamate N-acetyltransferase, found in Methanosarcina mazei (strain ATCC BAA-159 / DSM 3647 / Goe1 / Go1 / JCM 11833 / OCM 88) (Methanosarcina frisia).